The following is a 1093-amino-acid chain: Electroneutral sodium bicarbonate exchanger 1 (1093 aa).

2 disordered regions span residues M1–D25 and P55–P95. At M1–C478 the chain is on the extracellular side. The span at Q59–G77 shows a compositional bias: basic residues. Residues F167 and L169 each contribute to the Zn(2+) site. Positions L340 to L344 match the VTVLP; mediates dimerization motif. Residues L479–L499 traverse the membrane as a helical segment. At L500–A523 the chain is on the cytoplasmic side. A helical membrane pass occupies residues Y524–F544. Residues E545–C565 are Extracellular-facing. The helical transmembrane segment at I566–V586 threads the bilayer. The Cytoplasmic portion of the chain corresponds to C587–E595. Residues A596 to L616 traverse the membrane as a helical segment. Residues A617–H687 are Extracellular-facing. Cystine bridges form between C636–C684 and C638–C672. An N-linked (GlcNAc) asparagine glycan is attached at N646. The chain crosses the membrane as a helical span at residues G688–L708. At S709–D731 the chain is on the cytoplasmic side. A helical transmembrane segment spans residues F732–S752. Residues P753 to N778 lie on the Extracellular side of the membrane. The chain crosses the membrane as a helical span at residues P779–M799. Over D800–D824 the chain is Cytoplasmic. Residues L825–A845 form a helical membrane-spanning segment. The Extracellular portion of the chain corresponds to A846–T881. Residues G882–I902 traverse the membrane as a helical segment. Topologically, residues P903–M904 are cytoplasmic. A helical membrane pass occupies residues P905–F925. Topologically, residues D926 to C962 are extracellular. Residues L963–L983 traverse the membrane as a helical segment. The Cytoplasmic segment spans residues A984 to N1093. Positions E1010–G1036 form a coiled coil.

Belongs to the anion exchanger (TC 2.A.31) family. As to quaternary structure, homodimer. Expressed in the pyramidal cells of the hippocampus (at protein level). Highly expressed in all major regions of the brain, spinal column and in testis, and moderate levels in trachea, thyroid and medulla region of kidney. Low expression levels observed in pancreas and kidney cortex. In terms of tissue distribution, expressed in the brain. As to expression, expressed in the brain, heart and kidney.

It is found in the apical cell membrane. The protein localises to the basolateral cell membrane. It localises to the cytoplasmic vesicle. Its subcellular location is the secretory vesicle. The protein resides in the synaptic vesicle membrane. It is found in the cell membrane. The enzyme catalyses 2 hydrogencarbonate(out) + chloride(in) + Na(+)(out) = 2 hydrogencarbonate(in) + chloride(out) + Na(+)(in). Activity is inhibited by 4,4'-Di-isothiocyanatostilbene-2,2'-disulfonic acid (DIDS - an inhibitor of several anion channels and transporters). With respect to regulation, activity is inhibited by 4,4'-Di-isothiocyanatostilbene-2,2'-disulfonic acid (DIDS - an inhibitor of several anion channels and transporters). Zinc-binding negatively regulates its activity. Mediates electroneutral sodium- and carbonate-dependent chloride-HCO3(-) exchange with a Na(+):HCO3(-) stoichiometry of 2:1. Plays a major role in pH regulation in neurons. Mediates sodium reabsorption in the renal cortical collecting ducts. In Homo sapiens (Human), this protein is Electroneutral sodium bicarbonate exchanger 1.